The following is a 593-amino-acid chain: Transcription factor ATEG_07667 (593 aa).

A DNA-binding region (zn(2)-C6 fungal-type) is located at residues 18–47 (CTQCYKAKCRCVRTPSGDTCERCIRLKKRC).

It localises to the nucleus. Its function is as follows. Transcriptional regulator that regulates both the azasperpyranone A biosynthesis clusters A and B. Specifically up-regulates the expression of the cluster A and B specific transcription factors ATEG_03638 and ATEG_07666, which in turn activate the expression of their respective clusters. This is Transcription factor ATEG_07667 from Aspergillus terreus (strain NIH 2624 / FGSC A1156).